Consider the following 351-residue polypeptide: Putative F-box protein At5g52610 (351 aa).

Residues 1–41 (MISEDLLVEILLRLPVKPLARCLCVCKLWATIIRSRYFINL) form the F-box domain.

This Arabidopsis thaliana (Mouse-ear cress) protein is Putative F-box protein At5g52610.